The primary structure comprises 346 residues: Probable disease resistance protein At5g45440 (346 aa).

The NB-ARC domain maps to 38-116 (KQVEDRVETD…AYAPRIWVSM (79 aa)). Position 85–92 (85–92 (GEYGVGKT)) interacts with ATP. The segment at 315-346 (FDDGKANQNGSKDGKTDSVDNPNSEESKTKPL) is disordered.

Its function is as follows. Possible disease resistance protein. The polypeptide is Probable disease resistance protein At5g45440 (Arabidopsis thaliana (Mouse-ear cress)).